A 262-amino-acid polypeptide reads, in one-letter code: tRNA (guanine-N(1)-)-methyltransferase (262 aa).

S-adenosyl-L-methionine contacts are provided by residues G112 and 132 to 137 (IGDYIL).

This sequence belongs to the RNA methyltransferase TrmD family. As to quaternary structure, homodimer.

The protein resides in the cytoplasm. It carries out the reaction guanosine(37) in tRNA + S-adenosyl-L-methionine = N(1)-methylguanosine(37) in tRNA + S-adenosyl-L-homocysteine + H(+). Specifically methylates guanosine-37 in various tRNAs. The polypeptide is tRNA (guanine-N(1)-)-methyltransferase (Desulfatibacillum aliphaticivorans).